Consider the following 385-residue polypeptide: Galactokinase (385 aa).

A substrate-binding site is contributed by 34–37 (EHTD). 124–130 (SAGLSSS) contacts ATP. Mg(2+) contacts are provided by Ser-130 and Glu-162. Asp-174 acts as the Proton acceptor in catalysis. Tyr-223 lines the substrate pocket.

The protein belongs to the GHMP kinase family. GalK subfamily.

It is found in the cytoplasm. The catalysed reaction is alpha-D-galactose + ATP = alpha-D-galactose 1-phosphate + ADP + H(+). It functions in the pathway carbohydrate metabolism; galactose metabolism. In terms of biological role, catalyzes the transfer of the gamma-phosphate of ATP to D-galactose to form alpha-D-galactose-1-phosphate (Gal-1-P). This Pasteurella multocida (strain Pm70) protein is Galactokinase.